Consider the following 602-residue polypeptide: MAQAWAFLLLPVLLLSSYASHRLFPSYITGPLCGSTTTSSSSSSGVRSFLCSQQDSQTPSPASTMYKTAFHFQPAKNWINDPSGPMYFNGFYHEFYQYNLNGPTFGDIVWGHSVSTDLVNWIGLEPALVRDTPSDIDGCWTGSVTILPGGQPVIIYTGGDIEKHQAQNIAFPKNRSDPYLREWTKVINNPVLLPNEPGMNSIEFRDPTTGWIGPDGHWRMAVGAEWHGYSAALLYKSEDFLNWTMVDHPLYSHNGTNMWECPDFYAVLPGNNGGLDLSAAIPQGAKHALKMSVDSVDKYMIGVYDLERDAFVPDVVLDDHRLWLRIDYGTFYASKSFYDSKKGRRVIWGWSRETDSPSDDLEKGWAGLHTIPRTIWLDGDGKQLLQWPVDEIESLRTNEINHQGLELNKGDLFEIKGVDTFQADVEIDFELPSLDDAEPFDPSWLLDPEMHCGEAGASVQGGIGPFGLVILASNDMNEHTEVYFRVYKSQEKGMVLMCSDLRRSSLRPGLETPAYGGFFELDLAKEKKISLRTLIDRSAVESFGGGGRVCITSRVYPAVLADGGSAHMYAFNNGNAIVKVPQLRAWTMRKAQVNVEMGWSAI.

Positions 1 to 19 (MAQAWAFLLLPVLLLSSYA) are cleaved as a signal peptide. Residue Asp-81 is part of the active site. 3 N-linked (GlcNAc...) asparagine glycosylation sites follow: Asn-174, Asn-242, and Asn-254. A disulfide bridge connects residues Cys-452 and Cys-498.

This sequence belongs to the glycosyl hydrolase 32 family. As to expression, detected in leaves, with maximum levels at the leaf tip.

The enzyme catalyses Hydrolysis of terminal, non-reducing (2-&gt;1)-linked beta-D-fructofuranose residues in fructans.. Its activity is regulated as follows. Inhibited by sucrose. Its function is as follows. Hydrolyzes inulin-type beta-(2,1)-fructans. Has low activity against beta-(2,6)-linked fructans. May play a role as a beta-(2,1)-trimmer during graminan biosynthesis. The polypeptide is Fructan 1-exohydrolase (Bromus pictus (Patagonian grass)).